Consider the following 132-residue polypeptide: ATP synthase epsilon chain (132 aa).

The protein belongs to the ATPase epsilon chain family. As to quaternary structure, F-type ATPases have 2 components, CF(1) - the catalytic core - and CF(0) - the membrane proton channel. CF(1) has five subunits: alpha(3), beta(3), gamma(1), delta(1), epsilon(1). CF(0) has three main subunits: a, b and c.

The protein localises to the cell inner membrane. In terms of biological role, produces ATP from ADP in the presence of a proton gradient across the membrane. The sequence is that of ATP synthase epsilon chain from Anaeromyxobacter sp. (strain K).